The primary structure comprises 474 residues: Dihydrolipoyl dehydrogenase (474 aa).

FAD contacts are provided by residues 34-51 (EGNP…GGTC), Lys-60, and Gly-124. The cysteines at positions 51 and 56 are disulfide-linked. NAD(+)-binding positions include 189–193 (GAGVI), Glu-212, Val-246, and 278–281 (SVGR). Residues Asp-321 and Ala-329 each contribute to the FAD site. His-453 (proton acceptor) is an active-site residue.

Belongs to the class-I pyridine nucleotide-disulfide oxidoreductase family. The cofactor is FAD.

It localises to the cytoplasm. The catalysed reaction is N(6)-[(R)-dihydrolipoyl]-L-lysyl-[protein] + NAD(+) = N(6)-[(R)-lipoyl]-L-lysyl-[protein] + NADH + H(+). Functionally, the branched-chain alpha-keto dehydrogenase complex catalyzes the overall conversion of alpha-keto acids to acyl-CoA and CO(2). It contains multiple copies of 3 enzymatic components: branched-chain alpha-keto acid decarboxylase (E1), lipoamide acyltransferase (E2) and lipoamide dehydrogenase (E3). The polypeptide is Dihydrolipoyl dehydrogenase (odhL) (Cupriavidus necator (strain ATCC 17699 / DSM 428 / KCTC 22496 / NCIMB 10442 / H16 / Stanier 337) (Ralstonia eutropha)).